A 66-amino-acid polypeptide reads, in one-letter code: Large ribosomal subunit protein uL29 (66 aa).

This sequence belongs to the universal ribosomal protein uL29 family.

The chain is Large ribosomal subunit protein uL29 from Agrobacterium fabrum (strain C58 / ATCC 33970) (Agrobacterium tumefaciens (strain C58)).